Consider the following 751-residue polypeptide: Glutathione biosynthesis bifunctional protein GshAB (751 aa).

Positions 1 to 336 are glutamate--cysteine ligase; that stretch reads MELDAVGKAI…QADQLTRQVL (336 aa).

The protein in the N-terminal section; belongs to the glutamate--cysteine ligase type 1 family. Type 2 subfamily. As to quaternary structure, monomer.

The enzyme catalyses L-cysteine + L-glutamate + ATP = gamma-L-glutamyl-L-cysteine + ADP + phosphate + H(+). The catalysed reaction is gamma-L-glutamyl-L-cysteine + glycine + ATP = glutathione + ADP + phosphate + H(+). Its pathway is sulfur metabolism; glutathione biosynthesis; glutathione from L-cysteine and L-glutamate: step 1/2. The protein operates within sulfur metabolism; glutathione biosynthesis; glutathione from L-cysteine and L-glutamate: step 2/2. Its function is as follows. Synthesizes glutathione from L-glutamate and L-cysteine via gamma-L-glutamyl-L-cysteine. This Lactiplantibacillus plantarum (strain ATCC BAA-793 / NCIMB 8826 / WCFS1) (Lactobacillus plantarum) protein is Glutathione biosynthesis bifunctional protein GshAB (gshAB).